A 474-amino-acid polypeptide reads, in one-letter code: MYLMITAMKAQIESIPCKICGDKSSGIHYGVITCEGCKGFFRRSQQGTVSYSCPRQKSCLIDRTSRNRCQHCRLQKCLAVGMSRDAVKFGRMSKKQRDSLFAEVQKHRQQQQDDKTGDESEKNQESQAPGEAEPLTPSYALSSSGVTEIPDDLSGYVNGQTQEEGKADSAIGGFYLDIQPSPDQSGLDMDGIKLEPVCDLSSDSGLDQYCCYSNGDASPPHDDLEHLSENICKSHLETCQYLREELQPSNWQTVLQSNLEAYQKKSQEDMWQLCAVKVTEAVQYVVEFAKRIDGFMELCQNDQIVLLKAGSLEVVFVRMCRAYNSQNNTVFFDSKYAGPEVFKALGCDDLISSVFEFAKSLNSLQLSEDEIGLFSAYVLMSADRSWLQEKTRVEKLQQKIKIALQNLLQKNKRDEGILTKLVCKVSTVRMLCRRHMEKLSAFRALYPEMVHTRFPPLYKELFGSDFEQILPQEA.

The segment at residues 14-89 (SIPCKICGDK…VGMSRDAVKF (76 aa)) is a DNA-binding region (nuclear receptor). 2 consecutive NR C4-type zinc fingers follow at residues 17 to 37 (CKIC…CEGC) and 53 to 72 (CPRQ…CQHC). Over residues 98-124 (DSLFAEVQKHRQQQQDDKTGDESEKNQ) the composition is skewed to basic and acidic residues. Positions 98–144 (DSLFAEVQKHRQQQQDDKTGDESEKNQESQAPGEAEPLTPSYALSSS) are disordered. The NR LBD domain occupies 223-461 (DLEHLSENIC…TRFPPLYKEL (239 aa)). Residues 450 to 461 (VHTRFPPLYKEL) form an AF-2 region.

It belongs to the nuclear hormone receptor family.

It is found in the nucleus. Functionally, nuclear receptor that binds DNA as a monomer to ROR response elements (RORE). Required for proper cerebellum development. The chain is Nuclear receptor ROR-alpha B (rorab) from Danio rerio (Zebrafish).